Reading from the N-terminus, the 423-residue chain is Histidinol dehydrogenase (423 aa).

The NAD(+) site is built by tyrosine 116, glutamine 177, and asparagine 200. The substrate site is built by serine 223, glutamine 245, and histidine 248. 2 residues coordinate Zn(2+): glutamine 245 and histidine 248. Catalysis depends on proton acceptor residues glutamate 313 and histidine 314. 4 residues coordinate substrate: histidine 314, aspartate 347, glutamate 401, and histidine 406. Aspartate 347 is a binding site for Zn(2+). Residue histidine 406 coordinates Zn(2+).

Belongs to the histidinol dehydrogenase family. Zn(2+) is required as a cofactor.

It catalyses the reaction L-histidinol + 2 NAD(+) + H2O = L-histidine + 2 NADH + 3 H(+). It participates in amino-acid biosynthesis; L-histidine biosynthesis; L-histidine from 5-phospho-alpha-D-ribose 1-diphosphate: step 9/9. In terms of biological role, catalyzes the sequential NAD-dependent oxidations of L-histidinol to L-histidinaldehyde and then to L-histidine. In Staphylococcus saprophyticus subsp. saprophyticus (strain ATCC 15305 / DSM 20229 / NCIMB 8711 / NCTC 7292 / S-41), this protein is Histidinol dehydrogenase.